The sequence spans 60 residues: TERPDFCLEPPYTGPCKAAMIRYFYNAKAGFCETFVYGGCRAKSNNFKSAEDCMRTCGGA.

The BPTI/Kunitz inhibitor domain maps to 7 to 57; sequence CLEPPYTGPCKAAMIRYFYNAKAGFCETFVYGGCRAKSNNFKSAEDCMRTC. Disulfide bonds link C7–C57, C16–C40, and C32–C53.

The protein localises to the secreted. In terms of biological role, this inhibitor has activity very similar to that of the basic protease inhibitor from bovine tissues. In Bos taurus (Bovine), this protein is Serum basic protease inhibitor.